Reading from the N-terminus, the 289-residue chain is 4-hydroxy-tetrahydrodipicolinate synthase (289 aa).

T43 lines the pyruvate pocket. The active-site Proton donor/acceptor is Y131. The active-site Schiff-base intermediate with substrate is K160. V200 is a binding site for pyruvate.

Belongs to the DapA family. As to quaternary structure, homotetramer; dimer of dimers.

It localises to the cytoplasm. The catalysed reaction is L-aspartate 4-semialdehyde + pyruvate = (2S,4S)-4-hydroxy-2,3,4,5-tetrahydrodipicolinate + H2O + H(+). It functions in the pathway amino-acid biosynthesis; L-lysine biosynthesis via DAP pathway; (S)-tetrahydrodipicolinate from L-aspartate: step 3/4. In terms of biological role, catalyzes the condensation of (S)-aspartate-beta-semialdehyde [(S)-ASA] and pyruvate to 4-hydroxy-tetrahydrodipicolinate (HTPA). The chain is 4-hydroxy-tetrahydrodipicolinate synthase from Methanococcus maripaludis (strain C7 / ATCC BAA-1331).